Here is a 268-residue protein sequence, read N- to C-terminus: Tryptophan synthase alpha chain (268 aa).

Catalysis depends on proton acceptor residues glutamate 47 and aspartate 58.

The protein belongs to the TrpA family. Tetramer of two alpha and two beta chains.

It carries out the reaction (1S,2R)-1-C-(indol-3-yl)glycerol 3-phosphate + L-serine = D-glyceraldehyde 3-phosphate + L-tryptophan + H2O. Its pathway is amino-acid biosynthesis; L-tryptophan biosynthesis; L-tryptophan from chorismate: step 5/5. In terms of biological role, the alpha subunit is responsible for the aldol cleavage of indoleglycerol phosphate to indole and glyceraldehyde 3-phosphate. This chain is Tryptophan synthase alpha chain, found in Chlorobium phaeobacteroides (strain BS1).